We begin with the raw amino-acid sequence, 381 residues long: Chaperone protein DnaJ (381 aa).

One can recognise a J domain in the interval 3-66; sequence DYYETLGVER…DKRRMYDSGV (64 aa). A CR-type zinc finger spans residues 129–211; the sequence is GGTAHVKINT…CMGHGRVRTT (83 aa). Residues cysteine 142, cysteine 145, cysteine 159, cysteine 162, cysteine 185, cysteine 188, cysteine 199, and cysteine 202 each contribute to the Zn(2+) site. CXXCXGXG motif repeat units follow at residues 142 to 149, 159 to 166, 185 to 192, and 199 to 206; these read CQECGGSG, CPDCHGQG, CERCEGHG, and CPSCMGHG. Positions 355-381 are disordered; sequence ATHVSQASRPQAGQKKGFFSKLKDALS. The segment covering 356 to 365 has biased composition (polar residues); it reads THVSQASRPQ.

The protein belongs to the DnaJ family. In terms of assembly, homodimer. It depends on Zn(2+) as a cofactor.

The protein resides in the cytoplasm. Functionally, participates actively in the response to hyperosmotic and heat shock by preventing the aggregation of stress-denatured proteins and by disaggregating proteins, also in an autonomous, DnaK-independent fashion. Unfolded proteins bind initially to DnaJ; upon interaction with the DnaJ-bound protein, DnaK hydrolyzes its bound ATP, resulting in the formation of a stable complex. GrpE releases ADP from DnaK; ATP binding to DnaK triggers the release of the substrate protein, thus completing the reaction cycle. Several rounds of ATP-dependent interactions between DnaJ, DnaK and GrpE are required for fully efficient folding. Also involved, together with DnaK and GrpE, in the DNA replication of plasmids through activation of initiation proteins. The protein is Chaperone protein DnaJ of Bifidobacterium longum (strain NCC 2705).